Consider the following 331-residue polypeptide: Anthranilate phosphoribosyltransferase (331 aa).

Residues glycine 79, 82–83 (GD), threonine 87, 89–92 (NIST), 107–115 (KHGNYGATS), and alanine 119 contribute to the 5-phospho-alpha-D-ribose 1-diphosphate site. Position 79 (glycine 79) interacts with anthranilate. Serine 91 is a Mg(2+) binding site. Asparagine 110 contacts anthranilate. Arginine 165 is a binding site for anthranilate. Residues aspartate 223 and glutamate 224 each coordinate Mg(2+).

It belongs to the anthranilate phosphoribosyltransferase family. As to quaternary structure, homodimer. Mg(2+) serves as cofactor.

It catalyses the reaction N-(5-phospho-beta-D-ribosyl)anthranilate + diphosphate = 5-phospho-alpha-D-ribose 1-diphosphate + anthranilate. It participates in amino-acid biosynthesis; L-tryptophan biosynthesis; L-tryptophan from chorismate: step 2/5. Catalyzes the transfer of the phosphoribosyl group of 5-phosphorylribose-1-pyrophosphate (PRPP) to anthranilate to yield N-(5'-phosphoribosyl)-anthranilate (PRA). In Bacteroides fragilis (strain YCH46), this protein is Anthranilate phosphoribosyltransferase.